Here is a 548-residue protein sequence, read N- to C-terminus: (S)-beta-macrocarpene synthase (548 aa).

Residues aspartate 302 and aspartate 306 each contribute to the Mg(2+) site. Aspartate 302, aspartate 306, arginine 443, and asparagine 446 together coordinate substrate. The short motif at 302–306 (DDTLD) is the DDXXD motif element. Mg(2+) is bound by residues asparagine 446, serine 450, and glutamate 454.

The protein belongs to the terpene synthase family. As to quaternary structure, monomer. It depends on Mg(2+) as a cofactor. Requires Mn(2+) as cofactor. Expressed in roots. Not detected in leaves, unless damaged by herbivory or infected by fungi.

Its subcellular location is the cytoplasm. The enzyme catalyses (S)-beta-bisabolene = (S)-beta-macrocarpene. The catalysed reaction is (2E,6E)-farnesyl diphosphate = (S)-beta-bisabolene + diphosphate. It catalyses the reaction (2E)-geranyl diphosphate = (4S)-limonene + diphosphate. It carries out the reaction (2E)-geranyl diphosphate = beta-myrcene + diphosphate. The enzyme catalyses (2E)-geranyl diphosphate = terpinolene + diphosphate. The catalysed reaction is (2E)-geranyl diphosphate + H2O = (S)-linalool + diphosphate. The protein operates within secondary metabolite biosynthesis; terpenoid biosynthesis. Involved in the biosynthesis of the bicyclic sesquiterpene (S)-beta-macrocarpene. Can use both geranyl diphosphate and farnesyl diphosphate as substrate, but not geranylgeranyl diphosphate. Produces mainly (S)-beta-macrocarpene, but also smaller amounts of beta-bisabolene and (E)-beta-farnesene when used with farnesyl diphosphate as substrate. In the presence of geranyl diphosphate, produces the acyclic monoterpenes beta-myrcene and linalool along with minor amounts of the cyclic compounds limonene, alpha-thujene, sabinene and alpha-terpinolene. May be involved in plant defense. This Zea mays (Maize) protein is (S)-beta-macrocarpene synthase.